The following is a 319-amino-acid chain: Ribosomal RNA small subunit methyltransferase H (319 aa).

Residues 39 to 41 (GGH), aspartate 59, phenylalanine 83, aspartate 104, and glutamine 111 each bind S-adenosyl-L-methionine.

This sequence belongs to the methyltransferase superfamily. RsmH family.

Its subcellular location is the cytoplasm. The catalysed reaction is cytidine(1402) in 16S rRNA + S-adenosyl-L-methionine = N(4)-methylcytidine(1402) in 16S rRNA + S-adenosyl-L-homocysteine + H(+). In terms of biological role, specifically methylates the N4 position of cytidine in position 1402 (C1402) of 16S rRNA. The sequence is that of Ribosomal RNA small subunit methyltransferase H from Ralstonia nicotianae (strain ATCC BAA-1114 / GMI1000) (Ralstonia solanacearum).